The sequence spans 140 residues: Ribosome maturation factor RimP (140 aa).

This sequence belongs to the RimP family.

It is found in the cytoplasm. Required for maturation of 30S ribosomal subunits. This is Ribosome maturation factor RimP from Campylobacter jejuni subsp. jejuni serotype O:23/36 (strain 81-176).